The primary structure comprises 306 residues: MTFLRVVKNKAYFRRFQVKFRRRREGKTDYYARRRLVAQDKNKYDSPKYRLVVRLTNKRVICQIVSSTLVGDKVHASADSSELVHYGVKVGLTNYAAAYCTGLLLARRLLTKLKLDSQFVGKVEADGELYHVEEDDNERRPFKALLDVGIKNVTTGNRVFGALKGACDGGLHVPHSEKRFPGYSVDDENNGTYDAQAHRDRIFGTHVANYMEYLKEEDPEKYKKQFSAYLKLGLDSESLEDMYASAHENIRKNPVLPTKPKRKLKHVREGSKVLTSKGSYVRNVKITKAQRRERVKQKISLLVNES.

This sequence belongs to the universal ribosomal protein uL18 family. As to quaternary structure, component of the large ribosomal subunit (LSU).

The protein localises to the cytoplasm. The protein resides in the nucleus. Component of the ribosome, a large ribonucleoprotein complex responsible for the synthesis of proteins in the cell. The small ribosomal subunit (SSU) binds messenger RNAs (mRNAs) and translates the encoded message by selecting cognate aminoacyl-transfer RNA (tRNA) molecules. The large subunit (LSU) contains the ribosomal catalytic site termed the peptidyl transferase center (PTC), which catalyzes the formation of peptide bonds, thereby polymerizing the amino acids delivered by tRNAs into a polypeptide chain. The nascent polypeptides leave the ribosome through a tunnel in the LSU and interact with protein factors that function in enzymatic processing, targeting, and the membrane insertion of nascent chains at the exit of the ribosomal tunnel. The chain is Large ribosomal subunit protein uL18 (RPL5) from Theileria annulata.